We begin with the raw amino-acid sequence, 279 residues long: Large ribosomal subunit protein uL2 (279 aa).

The segment at 223 to 279 (TVRGSAMNPNDHPHGGGEGRSPVGMDAPRTPWGKRHMGVKTRNNKKSSTSMIVRRRK) is disordered. The segment covering 254-267 (WGKRHMGVKTRNNK) has biased composition (basic residues).

This sequence belongs to the universal ribosomal protein uL2 family. Part of the 50S ribosomal subunit. Forms a bridge to the 30S subunit in the 70S ribosome.

Functionally, one of the primary rRNA binding proteins. Required for association of the 30S and 50S subunits to form the 70S ribosome, for tRNA binding and peptide bond formation. It has been suggested to have peptidyltransferase activity; this is somewhat controversial. Makes several contacts with the 16S rRNA in the 70S ribosome. The polypeptide is Large ribosomal subunit protein uL2 (Ureaplasma urealyticum serovar 10 (strain ATCC 33699 / Western)).